A 421-amino-acid polypeptide reads, in one-letter code: Medium-chain specific acyl-CoA dehydrogenase, mitochondrial (421 aa).

The transit peptide at Met1–Thr25 directs the protein to the mitochondrion. The residue at position 69 (Lys69) is an N6-acetyllysine; alternate. Residue Lys69 is modified to N6-succinyllysine; alternate. Lys79 is subject to N6-acetyllysine. An FAD-binding site is contributed by Tyr158–Ser167. Ser167 contacts octanoyl-CoA. Lys179 bears the N6-succinyllysine mark. FAD is bound at residue Trp191–Thr193. The residue at position 212 (Lys212) is an N6-acetyllysine; alternate. An N6-succinyllysine; alternate modification is found at Lys212. Ser216 provides a ligand contact to octanoyl-CoA. Residues Lys217, Lys259, and Lys271 each carry the N6-acetyllysine; alternate modification. N6-succinyllysine; alternate is present on residues Lys217, Lys259, and Lys271. Octanoyl-CoA is bound at residue Asp278. The residue at position 279 (Lys279) is an N6-acetyllysine. Octanoyl-CoA is bound at residue Arg281. Lys301 carries the N6-acetyllysine modification. Residues Arg306–Thr308 and His316–Gln317 contribute to the FAD site. Arg349 and Thr351 together coordinate octanoyl-CoA. Thr351 is modified (phosphothreonine). Gln374 to Gly378 serves as a coordination point for FAD. Position 401 (Glu401) interacts with octanoyl-CoA. Glu401 (proton acceptor) is an active-site residue. Gly402–Gln405 is an FAD binding site.

Belongs to the acyl-CoA dehydrogenase family. Homotetramer. Interacts with the heterodimeric electron transfer flavoprotein ETF. The cofactor is FAD. Acetylated. Could occur at proximity of the cofactor-binding sites and reduce the catalytic activity. Could be deacetylated by SIRT3.

It localises to the mitochondrion matrix. It catalyses the reaction a medium-chain 2,3-saturated fatty acyl-CoA + oxidized [electron-transfer flavoprotein] + H(+) = a medium-chain (2E)-enoyl-CoA + reduced [electron-transfer flavoprotein]. The catalysed reaction is pentanoyl-CoA + oxidized [electron-transfer flavoprotein] + H(+) = (2E)-pentenoyl-CoA + reduced [electron-transfer flavoprotein]. It carries out the reaction hexanoyl-CoA + oxidized [electron-transfer flavoprotein] + H(+) = (2E)-hexenoyl-CoA + reduced [electron-transfer flavoprotein]. The enzyme catalyses octanoyl-CoA + oxidized [electron-transfer flavoprotein] + H(+) = (2E)-octenoyl-CoA + reduced [electron-transfer flavoprotein]. It catalyses the reaction decanoyl-CoA + oxidized [electron-transfer flavoprotein] + H(+) = (2E)-decenoyl-CoA + reduced [electron-transfer flavoprotein]. The catalysed reaction is dodecanoyl-CoA + oxidized [electron-transfer flavoprotein] + H(+) = (2E)-dodecenoyl-CoA + reduced [electron-transfer flavoprotein]. It carries out the reaction tetradecanoyl-CoA + oxidized [electron-transfer flavoprotein] + H(+) = (2E)-tetradecenoyl-CoA + reduced [electron-transfer flavoprotein]. The enzyme catalyses oxidized [electron-transfer flavoprotein] + hexadecanoyl-CoA + H(+) = (2E)-hexadecenoyl-CoA + reduced [electron-transfer flavoprotein]. It participates in lipid metabolism; mitochondrial fatty acid beta-oxidation. Medium-chain specific acyl-CoA dehydrogenase is one of the acyl-CoA dehydrogenases that catalyze the first step of mitochondrial fatty acid beta-oxidation, an aerobic process breaking down fatty acids into acetyl-CoA and allowing the production of energy from fats. The first step of fatty acid beta-oxidation consists in the removal of one hydrogen from C-2 and C-3 of the straight-chain fatty acyl-CoA thioester, resulting in the formation of trans-2-enoyl-CoA. Electron transfer flavoprotein (ETF) is the electron acceptor that transfers electrons to the main mitochondrial respiratory chain via ETF-ubiquinone oxidoreductase (ETF dehydrogenase). Among the different mitochondrial acyl-CoA dehydrogenases, medium-chain specific acyl-CoA dehydrogenase acts specifically on acyl-CoAs with saturated 6 to 12 carbons long primary chains. The protein is Medium-chain specific acyl-CoA dehydrogenase, mitochondrial of Bos taurus (Bovine).